The sequence spans 352 residues: Chorismate synthase (352 aa).

Arg-48 and Arg-54 together coordinate NADP(+). Residues Arg-125–Ser-127, Asn-238–Ala-239, Ala-278, Lys-293–Ser-297, and Arg-319 each bind FMN.

The protein belongs to the chorismate synthase family. Homotetramer. It depends on FMNH2 as a cofactor.

The catalysed reaction is 5-O-(1-carboxyvinyl)-3-phosphoshikimate = chorismate + phosphate. It participates in metabolic intermediate biosynthesis; chorismate biosynthesis; chorismate from D-erythrose 4-phosphate and phosphoenolpyruvate: step 7/7. Catalyzes the anti-1,4-elimination of the C-3 phosphate and the C-6 proR hydrogen from 5-enolpyruvylshikimate-3-phosphate (EPSP) to yield chorismate, which is the branch point compound that serves as the starting substrate for the three terminal pathways of aromatic amino acid biosynthesis. This reaction introduces a second double bond into the aromatic ring system. The sequence is that of Chorismate synthase from Coxiella burnetii (strain RSA 493 / Nine Mile phase I).